The primary structure comprises 782 residues: Protein bicaudal D (782 aa).

Residues 15–77 (VQDLQMEVER…RHELDITQEA (63 aa)) adopt a coiled-coil conformation. Ser-103 bears the Phosphoserine mark. Residues 107 to 249 (ETSLNLQIFD…LETLQGEREA (143 aa)) adopt a coiled-coil conformation. Phosphoserine occurs at positions 285, 288, and 305. Thr-306 is subject to Phosphothreonine. Residue Ser-310 is modified to Phosphoserine. 2 coiled-coil regions span residues 320 to 368 (SEIH…FMSR) and 444 to 477 (TTTL…TLTH). Residue Ser-528 is modified to Phosphoserine. Coiled coils occupy residues 603-630 (EKVN…KREQ) and 695-743 (CEEY…MEMD). The segment at 699–722 (VTQVDDLNRQLEAAEEEKKTLNQL) is interaction with Rab6. The disordered stretch occupies residues 744-782 (REMRHVRRPMPAQRGTSGKSSFSTRPSSRNPASSNANPF). A compositionally biased stretch (polar residues) spans 757-767 (RGTSGKSSFST). Low complexity predominate over residues 768–782 (RPSSRNPASSNANPF).

It belongs to the BicD family. As to quaternary structure, may homodimerize but does not interact with BicDR. Interacts (via C-terminal domain) with Rab6. As to expression, in ovaries, expressed in oocyte and nurse cells.

Its subcellular location is the cytoplasm. It localises to the cytoskeleton. Its function is as follows. This protein is essential for differentiation. It may play a role in localizing of Nanos (a maternal determinant) activity in oocytes. Functions redundantly with BicDR. During oogenesis, plays a specific role, together with Rab6 but independently of Sec5, in the polarization of the oocyte microtubule cytoskeleton, in oskar mRNA localization and in the anterodorsal secretion of grk. Plays a role in the biogenesis of annulate lamellae containing nuclear pore complex components. During macrochaetae development, together with BicDR, involved in Rab 6 and Spn-F stability and distribution and actin cytoskeleton organization. The sequence is that of Protein bicaudal D from Drosophila melanogaster (Fruit fly).